Reading from the N-terminus, the 115-residue chain is uncharacterized protein (115 aa).

The N-terminal stretch at 1 to 24 (MLPLCLTFLSFFLSLGGSFKAVMT) is a signal peptide. 2 consecutive transmembrane segments (helical) span residues 39-59 (FWIF…ALAI) and 93-113 (YLTS…FLLS).

The protein resides in the membrane. This is an uncharacterized protein from Saccharomyces cerevisiae (strain ATCC 204508 / S288c) (Baker's yeast).